Here is a 250-residue protein sequence, read N- to C-terminus: Cysteine proteinase inhibitor 12 (250 aa).

Positions 1 to 32 are cleaved as a signal peptide; it reads MRVAATTRPASSSAAAPLPLFLLLAVAAAAAA. Cystatin domains follow at residues 49–137 and 156–202; these read GGAH…RNTG and PGWR…AEVV. The Secondary area of contact motif lies at 93–97; that stretch reads QVVAG.

The protein belongs to the cystatin family. Phytocystatin subfamily.

It localises to the secreted. Its function is as follows. Specific inhibitor of cysteine proteinases. Probably involved in the regulation of endogenous processes and in defense against pests and pathogens. The polypeptide is Cysteine proteinase inhibitor 12 (Oryza sativa subsp. japonica (Rice)).